The sequence spans 367 residues: Dual specificity protein phosphatase 1 (367 aa).

The Rhodanese domain occupies 20 to 137 (RAAQCLLLDC…FSASCPELCS (118 aa)). Residues 173 to 314 (GPVEILPFLY…LLQFESQVLA (142 aa)) enclose the Tyrosine-protein phosphatase domain. Cys-258 (phosphocysteine intermediate) is an active-site residue. Residues Ser-359 and Ser-364 each carry the phosphoserine; by MAPK1 and MAPK3 modification.

The protein belongs to the protein-tyrosine phosphatase family. Non-receptor class dual specificity subfamily. Phosphorylation at Ser-359 and Ser-364 by MAPK1/ERK2 and MAPK3/ERK1 reduces its rate of degradation. In terms of processing, 'Lys-48'-linked polyubiquitinated by NEURL3, leading to proteasomal degradation. As to expression, expressed at high levels in the lung, liver placenta and pancreas. Moderate levels seen in the heart and skeletal muscle. Lower levels found in the brain and kidney.

Its subcellular location is the nucleus. It carries out the reaction O-phospho-L-tyrosyl-[protein] + H2O = L-tyrosyl-[protein] + phosphate. It catalyses the reaction O-phospho-L-seryl-[protein] + H2O = L-seryl-[protein] + phosphate. The enzyme catalyses O-phospho-L-threonyl-[protein] + H2O = L-threonyl-[protein] + phosphate. In terms of biological role, dual specificity phosphatase that dephosphorylates MAP kinase MAPK1/ERK2 on both 'Thr-183' and 'Tyr-185', regulating its activity during the meiotic cell cycle. The polypeptide is Dual specificity protein phosphatase 1 (Homo sapiens (Human)).